Consider the following 339-residue polypeptide: UPF0450 protein C17orf58 (339 aa).

Positions 1 to 17 (MTARAFWLLCLIVGSSP) are cleaved as a signal peptide. Positions 17 to 191 (PEAPVAERKT…PQRDAEPGAE (175 aa)) are disordered. The span at 21-36 (VAERKTSPPHSRKPDS) shows a compositional bias: basic and acidic residues. Residues 56–72 (APQRPRAAEVAPAARAW) are compositionally biased toward low complexity. The span at 112-125 (ASPRREPASEDAPR) shows a compositional bias: basic and acidic residues. Residues 132–163 (LRFPAARPPALATEGSAGHAHPNRPRAAALAP) are compositionally biased toward low complexity. Intrachain disulfides connect C193/C267, C197/C271, and C208/C338. The NTR domain maps to 193–338 (CARACRSDLD…QIQGAIHTQC (146 aa)).

Belongs to the UPF0450 family.

The polypeptide is UPF0450 protein C17orf58 (C17orf58) (Homo sapiens (Human)).